The following is a 132-amino-acid chain: Small ribosomal subunit protein uS19 (132 aa).

The protein belongs to the universal ribosomal protein uS19 family. As to quaternary structure, part of the 30S ribosomal subunit.

Functionally, protein S19 forms a complex with S13 that binds strongly to the 16S ribosomal RNA. In Pyrococcus furiosus (strain ATCC 43587 / DSM 3638 / JCM 8422 / Vc1), this protein is Small ribosomal subunit protein uS19.